The chain runs to 193 residues: Holliday junction branch migration complex subunit RuvA (193 aa).

The interval 1 to 64 is domain I; that stretch reads MIGRIAGTLI…EDAHLLYGFG (64 aa). A domain II region spans residues 65-143; that stretch reads SAAERNTFRE…AELGHAPGAA (79 aa). The segment at 144-151 is flexible linker; the sequence is PVHDSAVD. The tract at residues 151–193 is domain III; that stretch reads DILNALLALGYSEKEAATAIKQVPAGTGVSDGIKLALKALSKA.

Belongs to the RuvA family. As to quaternary structure, homotetramer. Forms an RuvA(8)-RuvB(12)-Holliday junction (HJ) complex. HJ DNA is sandwiched between 2 RuvA tetramers; dsDNA enters through RuvA and exits via RuvB. An RuvB hexamer assembles on each DNA strand where it exits the tetramer. Each RuvB hexamer is contacted by two RuvA subunits (via domain III) on 2 adjacent RuvB subunits; this complex drives branch migration. In the full resolvosome a probable DNA-RuvA(4)-RuvB(12)-RuvC(2) complex forms which resolves the HJ.

It is found in the cytoplasm. In terms of biological role, the RuvA-RuvB-RuvC complex processes Holliday junction (HJ) DNA during genetic recombination and DNA repair, while the RuvA-RuvB complex plays an important role in the rescue of blocked DNA replication forks via replication fork reversal (RFR). RuvA specifically binds to HJ cruciform DNA, conferring on it an open structure. The RuvB hexamer acts as an ATP-dependent pump, pulling dsDNA into and through the RuvAB complex. HJ branch migration allows RuvC to scan DNA until it finds its consensus sequence, where it cleaves and resolves the cruciform DNA. This chain is Holliday junction branch migration complex subunit RuvA, found in Cupriavidus pinatubonensis (strain JMP 134 / LMG 1197) (Cupriavidus necator (strain JMP 134)).